A 199-amino-acid polypeptide reads, in one-letter code: Small ribosomal subunit protein mS38 (199 aa).

Belongs to the mitochondrion-specific ribosomal protein mS38 family. As to quaternary structure, component of the mitochondrial small ribosomal subunit (mt-SSU). Mature mammalian 55S mitochondrial ribosomes consist of a small (28S) and a large (39S) subunit. The 28S small subunit contains a 12S ribosomal RNA (12S mt-rRNA) and 30 different proteins. The 39S large subunit contains a 16S rRNA (16S mt-rRNA), a copy of mitochondrial valine transfer RNA (mt-tRNA(Val)), which plays an integral structural role, and 52 different proteins. Interacts with Aurora-A. Ubiquitously expressed and especially highly expressed in heart, skeletal muscle and testis.

The protein resides in the mitochondrion matrix. The protein localises to the nucleus. Its function is as follows. May act as a negative regulator of Aurora-A kinase, by down-regulation through proteasome-dependent degradation. The chain is Small ribosomal subunit protein mS38 (AURKAIP1) from Homo sapiens (Human).